The chain runs to 81 residues: Cytochrome b559 subunit alpha (81 aa).

Residues 21-35 form a helical membrane-spanning segment; sequence VIHSITIPALFIAGW. H23 is a binding site for heme.

The protein belongs to the PsbE/PsbF family. As to quaternary structure, heterodimer of an alpha subunit and a beta subunit. PSII is composed of 1 copy each of membrane proteins PsbA, PsbB, PsbC, PsbD, PsbE, PsbF, PsbH, PsbI, PsbJ, PsbK, PsbL, PsbM, PsbT, PsbX, PsbY, PsbZ, Psb30/Ycf12, at least 3 peripheral proteins of the oxygen-evolving complex and a large number of cofactors. It forms dimeric complexes. Requires heme b as cofactor.

The protein resides in the plastid. The protein localises to the chloroplast thylakoid membrane. Its function is as follows. This b-type cytochrome is tightly associated with the reaction center of photosystem II (PSII). PSII is a light-driven water:plastoquinone oxidoreductase that uses light energy to abstract electrons from H(2)O, generating O(2) and a proton gradient subsequently used for ATP formation. It consists of a core antenna complex that captures photons, and an electron transfer chain that converts photonic excitation into a charge separation. This Tetradesmus obliquus (Green alga) protein is Cytochrome b559 subunit alpha.